We begin with the raw amino-acid sequence, 927 residues long: Nonsense-mediated mRNA decay factor SMG8 (927 aa).

3 disordered regions span residues 543–581 (NTGK…NTAS), 611–636 (QARS…DTEN), and 643–662 (QEPA…AVST). The span at 551-566 (QDEDAGEDEAEEEEGQ) shows a compositional bias: acidic residues. The span at 613–633 (RSEQLSNSEQNTTRSGSSSVD) shows a compositional bias: polar residues. Positions 644–654 (EPAKKEAREDV) are enriched in basic and acidic residues.

This sequence belongs to the SMG8 family.

Functionally, involved in nonsense-mediated decay (NMD) of mRNAs containing premature stop codons. Probable component of kinase complex containing nonC and recruited to stalled ribosomes. This Drosophila sechellia (Fruit fly) protein is Nonsense-mediated mRNA decay factor SMG8.